A 256-amino-acid chain; its full sequence is Nuclear shuttle protein (256 aa).

The Bipartite nuclear localization signal signature appears at 21–42 (NYGFKRTFVVKRGDAKRRQTQV). Residues 81–96 (QLCKTQPNRSRSYIKL) carry the Nuclear localization signal motif. The segment at 150 to 187 (ELFGARIHSLGNLAVTPALKERFYILHVLKRVISVEKD) is interaction with Arabidopsis thaliana NSI protein.

This sequence belongs to the begomovirus nuclear shuttle protein family. As to quaternary structure, binds to single-stranded and double-stranded viral DNA. Interacts with the host nuclear shuttle interacting (NSI) protein. This interaction may allow NSP to recruit NSI monomers to the viral genome and thus regulate nuclear export of viral genome by NSP.

The protein localises to the host nucleus. It is found in the host cytoplasm. The protein resides in the host cell membrane. Its function is as follows. Binds to the genomic viral ssDNA, shuttles it into and out of the cell nucleus. Begomoviruses use 2 proteins to transport their DNA from cell to cell. The nuclear shuttle protein (NSP) shuttles it between nucleus and cytoplasm and the movement protein (MP) probably transports the DNA-NSP complex to the cell periphery and facilitates movement across the cell wall. The sequence is that of Nuclear shuttle protein from Pepper huasteco yellow vein virus (PHYVV).